The primary structure comprises 270 residues: Sec-independent protein translocase protein TatC (270 aa).

6 helical membrane-spanning segments follow: residues 25–45, 75–95, 111–131, 156–176, 195–211, and 213–233; these read FIAV…LFDI, VSLL…FWMF, VVIL…FIVF, LGFA…PLVL, KYAI…ITPP, and VVTQ…SIIG. A disordered region spans residues 243-270; the sequence is SDEEEAAENSDVQTDKSTDDTTPGEDQN.

The protein belongs to the TatC family. The Tat system comprises two distinct complexes: a TatABC complex, containing multiple copies of TatA, TatB and TatC subunits, and a separate TatA complex, containing only TatA subunits. Substrates initially bind to the TatABC complex, which probably triggers association of the separate TatA complex to form the active translocon.

Its subcellular location is the cell inner membrane. Functionally, part of the twin-arginine translocation (Tat) system that transports large folded proteins containing a characteristic twin-arginine motif in their signal peptide across membranes. Together with TatB, TatC is part of a receptor directly interacting with Tat signal peptides. The polypeptide is Sec-independent protein translocase protein TatC (Desulforapulum autotrophicum (strain ATCC 43914 / DSM 3382 / VKM B-1955 / HRM2) (Desulfobacterium autotrophicum)).